The primary structure comprises 257 residues: Zinc transporter ZupT (257 aa).

Helical transmembrane passes span 5–25 (LILT…AVLG), 32–52 (VLAF…LMEM), 61–81 (GMSP…YFGL), 109–129 (AILL…ATFV), and 137–157 (LGMG…LAVA). 2 residues coordinate Fe(2+): Asn-120 and Glu-123. 2 residues coordinate Zn(2+): Glu-123 and His-148. Fe(2+) contacts are provided by Asn-149, Glu-152, and Glu-181. Zn(2+) is bound at residue Glu-152. 3 consecutive transmembrane segments (helical) span residues 182 to 202 (ILGG…VVMA), 203 to 223 (AVMA…LMPL), and 236 to 256 (GVLC…TAGI).

Belongs to the ZIP transporter (TC 2.A.5) family. ZupT subfamily.

Its subcellular location is the cell inner membrane. It carries out the reaction Zn(2+)(in) = Zn(2+)(out). Functionally, mediates zinc uptake. May also transport other divalent cations. The protein is Zinc transporter ZupT of Escherichia fergusonii (strain ATCC 35469 / DSM 13698 / CCUG 18766 / IAM 14443 / JCM 21226 / LMG 7866 / NBRC 102419 / NCTC 12128 / CDC 0568-73).